The following is a 1076-amino-acid chain: Protein EXPORTIN 1B (1076 aa).

The 67-residue stretch at 37–103 folds into the Importin N-terminal domain; sequence ADNILRDLKA…KNYISDVIVQ (67 aa). HEAT repeat units follow at residues 135 to 171, 232 to 267, 282 to 319, 475 to 514, 564 to 601, 613 to 650, 683 to 720, 757 to 794, 799 to 836, 895 to 935, and 943 to 988; these read AKWKSFIPDLVIAAKTSETICENCMAILKLLSEEVFD, IFESPLLEILLKFFPVPAYRNLTLQCLSEVASLNFG, MNQLQAILPLNLNIPEAYSTGSSEEQAFIQNLALFFTS, DTEKQMLSKLSKQLSGEEWAWNNLNTLCWAIGSISGSMVV, KFLKTVVHKLFEFMHETHPGVQDMACDTFLKIVQKCKR, PFVSELLSGLATIVGDLQPHQIHTFYESVGSMIQAESD, LKEPDVIRTVLNILQTNTRVATSLGTFFLSQISLIFLD, REILKLIETFLDKAENQPHIGKQFVPPMMDQVLGDYAR, ARESEVLSLFATIINKYKVVMRDEVPLIFEAVFQCTLE, ETGL…VLTD, and KLHV…YTTK.

Belongs to the exportin family. Present in mature pollen grains, unpollinated pistils, and 2-week-old seedlings.

Its subcellular location is the nucleus. It is found in the nuclear pore complex. The protein resides in the nucleus membrane. Receptor for the leucine-rich nuclear export signal (NES). Binds cooperatively to the NES on its target protein and to the small GTPase Ran in its active GTP-bound form. Required for the maternal-to-embryonic transition and during gametophyte development. This is Protein EXPORTIN 1B from Arabidopsis thaliana (Mouse-ear cress).